The primary structure comprises 404 residues: 6-hydroxytryptophan 2,3-dioxygenase fscD (404 aa).

His-341 lines the heme b pocket.

Belongs to the indoleamine 2,3-dioxygenase family. The cofactor is heme.

The protein operates within secondary metabolite biosynthesis. Functionally, 6-hydroxytryptophan 2,3-dioxygenase; part of the fragmented gene cluster that mediates the biosynthesis of fusarochromene, a tryptophan-derived metabolite closely related to a group of mycotoxins including fusarochromanone. Within the pathway, fscD is responsible of the cleavage of the pyrrole ring of 6-hydroxytryptophan. The first step of the pathway is the epimerization of L-tryptophan to D-tryptophan in the presence of the NRPS-like tryptophan epimerase fscC. D-tryptophan is subsequently hydroxylated by the tryptophan 6-hydroxylase fscE to yield 6-hydroxytryptophan. The pyrrole ring undergoes cleavaged by the tryptophan 2,3-dioxygenase fscD and is finally converted to 4-hydroxykyrunenine by the hydrolase fscH. The NRPS-like oxidoreductase fscA reduces the carboxyl group to primary alcohol and the DMATS-type prenyltransferase fscG performs prenylation, followed by the formation of a chromene ring catalyzed by the oxidoreductase fscI, which leads to desacetylfusarochromene. Epoxidation by fscF and rearrangement reactions of chromene double bonds convert compound desacetylfusarochromene to fusarochromanones. Although specific acetyltransferases were not found near the fsc gene cluster, several predicted enzymes containing the N-acetyltransferase superfamily domain are present in the genome of F.equiseti. These predicted enzymes may have the potential to convert desacetylfusarochromene to fusarochromene. This Fusarium equiseti (Fusarium scirpi) protein is 6-hydroxytryptophan 2,3-dioxygenase fscD.